Reading from the N-terminus, the 153-residue chain is Ubiquitin-conjugating enzyme E2 36 (153 aa).

Residues Asn5 to Ser151 form the UBC core domain. Cys89 serves as the catalytic Glycyl thioester intermediate.

This sequence belongs to the ubiquitin-conjugating enzyme family. In terms of assembly, interacts with yeast and human Mms2, with the RING domain of RGLG2 and with UEV1A, UEV1B, UEV1C and UEV1D. In terms of tissue distribution, ubiquitously expressed at low level.

The enzyme catalyses S-ubiquitinyl-[E1 ubiquitin-activating enzyme]-L-cysteine + [E2 ubiquitin-conjugating enzyme]-L-cysteine = [E1 ubiquitin-activating enzyme]-L-cysteine + S-ubiquitinyl-[E2 ubiquitin-conjugating enzyme]-L-cysteine.. It participates in protein modification; protein ubiquitination. Its function is as follows. Catalyzes the synthesis of non-canonical poly-ubiquitin chains that are linked through 'Lys-63'. This type of poly-ubiquitination does not lead to protein degradation by the proteasome. Mediates transcriptional activation of target genes. Required for postreplication repair of UV-damaged DNA and for adapting root developmental programs to suboptimal availability of iron. The protein is Ubiquitin-conjugating enzyme E2 36 (UBC36) of Arabidopsis thaliana (Mouse-ear cress).